The chain runs to 201 residues: Small ribosomal subunit protein uS4c (201 aa).

The segment at 15-45 is disordered; it reads LGDLPGLSRKAIKRSYPPGEHGQKSRKPSEY. Residues 35-45 show a composition bias toward basic and acidic residues; it reads HGQKSRKPSEY. Residues 90-153 enclose the S4 RNA-binding domain; that stretch reads MRLDNTVFRL…ASRKLVENYL (64 aa).

This sequence belongs to the universal ribosomal protein uS4 family. In terms of assembly, part of the 30S ribosomal subunit. Contacts protein S5. The interaction surface between S4 and S5 is involved in control of translational fidelity.

It is found in the plastid. It localises to the chloroplast. In terms of biological role, one of the primary rRNA binding proteins, it binds directly to 16S rRNA where it nucleates assembly of the body of the 30S subunit. With S5 and S12 plays an important role in translational accuracy. The polypeptide is Small ribosomal subunit protein uS4c (rps4) (Pyropia yezoensis (Susabi-nori)).